A 153-amino-acid polypeptide reads, in one-letter code: Ribosome maturation factor RimP (153 aa).

Belongs to the RimP family.

The protein resides in the cytoplasm. Functionally, required for maturation of 30S ribosomal subunits. This Burkholderia pseudomallei (strain 1710b) protein is Ribosome maturation factor RimP.